The primary structure comprises 459 residues: ADP-specific phosphofructokinase (459 aa).

Positions 1–457 (MMEFLKDFQK…FASYLSLLKR (457 aa)) constitute an ADPK domain. 3 residues coordinate Mg(2+): Glu268, Glu298, and Asp441. The Proton acceptor role is filled by Asp441.

This sequence belongs to the carbohydrate kinase PfkC family. It depends on Mg(2+) as a cofactor.

The protein localises to the cytoplasm. The catalysed reaction is beta-D-fructose 6-phosphate + ADP = beta-D-fructose 1,6-bisphosphate + AMP + H(+). The protein operates within carbohydrate degradation; glycolysis. Functionally, catalyzes the phosphorylation of fructose 6-phosphate to fructose 1,6-bisphosphate using ADP as the phosphate donor. The protein is ADP-specific phosphofructokinase of Thermococcus litoralis.